A 133-amino-acid polypeptide reads, in one-letter code: MAAASISAIGCNQTLIGTSFYGGWGSSISGEDYQTMLSKTVAPPQQARVSRKAIRAVPMMKNVNEGKGLFAPLVVVTRNLVGKKRFNQLRGKAIALHSQVITEFCKSIGADAKQRQGLIRLAKKNGERLGFLA.

A chloroplast-targeting transit peptide spans 1-60; that stretch reads MAAASISAIGCNQTLIGTSFYGGWGSSISGEDYQTMLSKTVAPPQQARVSRKAIRAVPMM.

The protein belongs to the PGR5 family. As to quaternary structure, interacts with PGRL1A and PGRL1B. Disulfide bonds; Cys-11 and Cys-105 are probably involved in the formation of disulfide bridges with 'Cys-300' and 'Cys-303' of PGRL1A. 'Cys-272' and 'Cys-275' of PGRL1A may also be used to form the disulfide bridges, but in this case the cyclic electron flow is lost.

Its subcellular location is the plastid. It localises to the chloroplast thylakoid membrane. In terms of biological role, critical for growth under fluctuating-light conditions. Involved in the regulation of the cyclic electron flow (CEF) around Photosystem I. Essential for the reduction of PGRL1A by ferredoxin and for photoprotection. Contributes to maximize photosynthesis efficiency after a long dark adaptation via the regulation of non-photochemical quenching (NPQ); acts independently from DLDG1. Promotes the induction of steady-state proton motive force (pmf) and energy-dependent quenching (qE). This is Protein PROTON GRADIENT REGULATION 5, chloroplastic from Arabidopsis thaliana (Mouse-ear cress).